The primary structure comprises 427 residues: 3-phosphoshikimate 1-carboxyvinyltransferase (427 aa).

Residues Lys22, Ser23, and Arg27 each coordinate 3-phosphoshikimate. Phosphoenolpyruvate is bound at residue Lys22. The phosphoenolpyruvate site is built by Gly96 and Arg124. 3-phosphoshikimate-binding residues include Ser169, Ser170, Gln171, Ser197, Asp313, Asn336, and Lys340. A phosphoenolpyruvate-binding site is contributed by Gln171. Asp313 serves as the catalytic Proton acceptor. Positions 344, 386, and 411 each coordinate phosphoenolpyruvate.

Belongs to the EPSP synthase family. As to quaternary structure, monomer.

Its subcellular location is the cytoplasm. It carries out the reaction 3-phosphoshikimate + phosphoenolpyruvate = 5-O-(1-carboxyvinyl)-3-phosphoshikimate + phosphate. It participates in metabolic intermediate biosynthesis; chorismate biosynthesis; chorismate from D-erythrose 4-phosphate and phosphoenolpyruvate: step 6/7. Catalyzes the transfer of the enolpyruvyl moiety of phosphoenolpyruvate (PEP) to the 5-hydroxyl of shikimate-3-phosphate (S3P) to produce enolpyruvyl shikimate-3-phosphate and inorganic phosphate. This chain is 3-phosphoshikimate 1-carboxyvinyltransferase, found in Salmonella newport (strain SL254).